Consider the following 793-residue polypeptide: Putative potassium transporter 8 (793 aa).

Over 1–22 the chain is Cytoplasmic; the sequence is MDLEFGRGMRSPQRDSWKTTLL. A helical transmembrane segment spans residues 23-43; it reads LAYQSLGVVYGDLSISPLYVF. The Extracellular segment spans residues 44–59; it reads KSTFAEDIQHSETNEE. The helical transmembrane segment at 60–80 threads the bilayer; sequence IFGVLSFVFWTLTLIPLIKYV. The Cytoplasmic portion of the chain corresponds to 81–151; it reads SIVLRADDNG…EKHKKLHTAL (71 aa). Residues 152–172 traverse the membrane as a helical segment; the sequence is LIMVLIGTCMVIGDGVLTPAI. Over 173–191 the chain is Extracellular; it reads SVFSAVSGLEFSLSKDHRE. The helical transmembrane segment at 192–212 threads the bilayer; that stretch reads YAVIPITCVILAFLFALQHYG. The Cytoplasmic portion of the chain corresponds to 213 to 215; that stretch reads THR. A helical membrane pass occupies residues 216–236; the sequence is VGFLFAPIVLAWLICMSALGL. Residues 237–264 lie on the Extracellular side of the membrane; it reads YNIIHWNPHVYQALNPCYMFKFLKKTRK. Residues 265–285 traverse the membrane as a helical segment; it reads YGWMSLGGILLCMTGSEAMFA. Over 286-292 the chain is Cytoplasmic; the sequence is DLGHFSY. The chain crosses the membrane as a helical span at residues 293 to 313; the sequence is SAIQLAFTSLVYPALILAYMG. The Extracellular portion of the chain corresponds to 314–343; sequence QAAYLSKHHDFYSNSQVGFYIAVPDKVRWP. The chain crosses the membrane as a helical span at residues 344-364; the sequence is VLVLAILASVVGSQAIISGTF. Residues 365–391 are Cytoplasmic-facing; that stretch reads SIINQSQSLSCFPRVKVVHTSDKIHGQ. A helical transmembrane segment spans residues 392 to 412; the sequence is IYIPEINWLLMILCIAVTVGF. At 413-422 the chain is on the extracellular side; sequence RDTKHMGNAS. A glycan (N-linked (GlcNAc...) asparagine) is linked at Asn420. A helical membrane pass occupies residues 423–443; it reads GLAVITVMLVTTCLTSLVIML. Residues 444–448 are Cytoplasmic-facing; that stretch reads CWRRP. The chain crosses the membrane as a helical span at residues 449–469; that stretch reads PVLALCFLLFFGSVEALYFSA. Residues 470–473 lie on the Extracellular side of the membrane; that stretch reads SLIK. A helical transmembrane segment spans residues 474–494; it reads FLEGAWLPILLALFLMAVMLV. Over 495–793 the chain is Cytoplasmic; it reads WHYTTIKKYE…LLEVGMVYVL (299 aa). Residues 664–675 show a composition bias toward polar residues; that stretch reads DSVQHSSAASVE. The tract at residues 664 to 698 is disordered; it reads DSVQHSSAASVETTTTRRRSGGGDDDGSPGGGGGR.

Belongs to the HAK/KUP transporter (TC 2.A.72.3) family.

It localises to the membrane. Functionally, high-affinity potassium transporter. In Oryza sativa subsp. japonica (Rice), this protein is Putative potassium transporter 8 (HAK8).